Reading from the N-terminus, the 393-residue chain is Formate-dependent phosphoribosylglycinamide formyltransferase (393 aa).

N(1)-(5-phospho-beta-D-ribosyl)glycinamide is bound by residues 22-23 (EL) and Glu-82. ATP contacts are provided by residues Arg-114, Lys-155, 160 to 165 (SSGKGQ), 195 to 198 (EGFI), and Glu-203. The region spanning 119–308 (RLAAEELGLP…EFALHARAIL (190 aa)) is the ATP-grasp domain. Residues Glu-267 and Glu-279 each contribute to the Mg(2+) site. N(1)-(5-phospho-beta-D-ribosyl)glycinamide is bound by residues Asp-286, Lys-356, and 363 to 364 (RR).

This sequence belongs to the PurK/PurT family. As to quaternary structure, homodimer.

It carries out the reaction N(1)-(5-phospho-beta-D-ribosyl)glycinamide + formate + ATP = N(2)-formyl-N(1)-(5-phospho-beta-D-ribosyl)glycinamide + ADP + phosphate + H(+). The protein operates within purine metabolism; IMP biosynthesis via de novo pathway; N(2)-formyl-N(1)-(5-phospho-D-ribosyl)glycinamide from N(1)-(5-phospho-D-ribosyl)glycinamide (formate route): step 1/1. In terms of biological role, involved in the de novo purine biosynthesis. Catalyzes the transfer of formate to 5-phospho-ribosyl-glycinamide (GAR), producing 5-phospho-ribosyl-N-formylglycinamide (FGAR). Formate is provided by PurU via hydrolysis of 10-formyl-tetrahydrofolate. This Azotobacter vinelandii (strain DJ / ATCC BAA-1303) protein is Formate-dependent phosphoribosylglycinamide formyltransferase.